A 316-amino-acid chain; its full sequence is 4-hydroxy-3-methylbut-2-enyl diphosphate reductase (316 aa).

Cys12 contacts [4Fe-4S] cluster. (2E)-4-hydroxy-3-methylbut-2-enyl diphosphate contacts are provided by His41 and His74. His41 and His74 together coordinate dimethylallyl diphosphate. 2 residues coordinate isopentenyl diphosphate: His41 and His74. Position 96 (Cys96) interacts with [4Fe-4S] cluster. His124 serves as a coordination point for (2E)-4-hydroxy-3-methylbut-2-enyl diphosphate. Position 124 (His124) interacts with dimethylallyl diphosphate. His124 serves as a coordination point for isopentenyl diphosphate. Glu126 serves as the catalytic Proton donor. A (2E)-4-hydroxy-3-methylbut-2-enyl diphosphate-binding site is contributed by Thr167. Cys197 is a [4Fe-4S] cluster binding site. Ser225, Ser226, Asn227, and Ser269 together coordinate (2E)-4-hydroxy-3-methylbut-2-enyl diphosphate. Dimethylallyl diphosphate-binding residues include Ser225, Ser226, Asn227, and Ser269. Isopentenyl diphosphate-binding residues include Ser225, Ser226, Asn227, and Ser269.

It belongs to the IspH family. In terms of assembly, homodimer. The cofactor is [4Fe-4S] cluster.

It catalyses the reaction isopentenyl diphosphate + 2 oxidized [2Fe-2S]-[ferredoxin] + H2O = (2E)-4-hydroxy-3-methylbut-2-enyl diphosphate + 2 reduced [2Fe-2S]-[ferredoxin] + 2 H(+). The catalysed reaction is dimethylallyl diphosphate + 2 oxidized [2Fe-2S]-[ferredoxin] + H2O = (2E)-4-hydroxy-3-methylbut-2-enyl diphosphate + 2 reduced [2Fe-2S]-[ferredoxin] + 2 H(+). Its pathway is isoprenoid biosynthesis; dimethylallyl diphosphate biosynthesis; dimethylallyl diphosphate from (2E)-4-hydroxy-3-methylbutenyl diphosphate: step 1/1. It functions in the pathway isoprenoid biosynthesis; isopentenyl diphosphate biosynthesis via DXP pathway; isopentenyl diphosphate from 1-deoxy-D-xylulose 5-phosphate: step 6/6. In terms of biological role, catalyzes the conversion of 1-hydroxy-2-methyl-2-(E)-butenyl 4-diphosphate (HMBPP) into a mixture of isopentenyl diphosphate (IPP) and dimethylallyl diphosphate (DMAPP). Acts in the terminal step of the DOXP/MEP pathway for isoprenoid precursor biosynthesis. This is 4-hydroxy-3-methylbut-2-enyl diphosphate reductase from Salmonella paratyphi B (strain ATCC BAA-1250 / SPB7).